The primary structure comprises 851 residues: MATNYCDEFERNPTRNPRTGRTIKRGGPVFRALERECSDGAARVFPAAAVRGAAAARAASPRVAAASPCPEFARDPTRNPRTGRPIKRGGPVFRALERECADYGGASPRRVSPARAFPNRRVSPARRQSPAEAAEASPCPEFARDPTRNPRTGRTIKRGGPTYRALEAECADYGRLSPIRSPWSDWSSTGLSPFRSHMRKSPARRSPARRSPARRSLARYTEHLTSDSETEVDYDARNVIRSQVGPGGVCERFAADPTRNPVTGSPLSRNDPLYTDLMEICKGYPDTPLTKSLTGEGTDDDTCEAFCRDPTRNPVTGQKMRRNGIEYQMFAEECDCSGISRPSGVSRTSGTSGSSGSSASSRPPNSFEAPGASSRPPNSFEASGAARVPGTPSVSRGEPRWMSSISTRHNYDESNPMSVAFRLRHVKDIRKFLRTVRPGRSGFCATDKGGWLGSAAVSDNVIGQGSWGSVHMVKFRDFPEEFVVKEAVLMSVSEKHRYKPTVVWDEWAAGSVPDEVVVNNMVTEIAATGMTPFVPLTAGAGACDSCNPQLLEKAAKVTKCYLQAMEAADFSLDRVLPTMSPDQAASALAQILLGLQSLQTTLGIMHNDIKAHNILVKRVPPGGYWKVTDSFNGQVFYIPNEGYLCMLADYGVVRLVKPAVGMDTLYGTRNARFVPRDVGRWGKGAGTEYVVTPIRSKISVVVRGGRFVGVEPNKAVRYWKNTDTSKVGDVITTNNVFYMGYDIEPDMQVQLDDTNSFPVWESRGDVADCVRTFVGGKRASQPGFHRLFYKKTGSAWEKAAETVAKQNPLFSGFTLDGSGLKYIRAATACAYIFPGMAVPRPGEREIESFTM.

Disordered stretches follow at residues 1 to 24 (MATN…RTIK), 61 to 91 (PRVA…RGGP), 104 to 160 (GGAS…KRGG), 190 to 216 (GLSP…ARRS), and 340 to 400 (SRPS…GEPR). Positions 125–141 (ARRQSPAEAAEASPCPE) are enriched in low complexity. Basic residues predominate over residues 196–216 (SHMRKSPARRSPARRSPARRS). Over residues 340 to 366 (SRPSGVSRTSGTSGSSGSSASSRPPNS) the composition is skewed to low complexity. The region spanning 456-851 (AVSDNVIGQG…GEREIESFTM (396 aa)) is the Protein kinase domain. ATP contacts are provided by residues 462–470 (IGQGSWGSV) and Lys-485. Catalysis depends on Asp-608, which acts as the Proton acceptor.

Belongs to the protein kinase superfamily. Ser/Thr protein kinase family.

It carries out the reaction L-seryl-[protein] + ATP = O-phospho-L-seryl-[protein] + ADP + H(+). It catalyses the reaction L-threonyl-[protein] + ATP = O-phospho-L-threonyl-[protein] + ADP + H(+). The polypeptide is Putative serine/threonine-protein kinase 019R (Dryophytes versicolor (chameleon treefrog)).